A 635-amino-acid chain; its full sequence is Paraneoplastic antigen-like protein 8B (635 aa).

Disordered regions lie at residues 115 to 202 (PTQA…DESL), 260 to 332 (TDKS…NPEF), and 492 to 635 (AARE…PKCR). The segment covering 133–147 (SETQAQDSGEVTGQA) has biased composition (polar residues). A compositionally biased stretch (basic residues) spans 156–183 (NPRRGRRGRRNRTRRNRLTQKGKKRSRG). Residues 261–273 (DKSKKEEAEKEPA) are compositionally biased toward basic and acidic residues. Composition is skewed to acidic residues over residues 302-329 (PDEE…ELDN) and 502-524 (GSEE…EASE). Positions 531–540 (RKPRAKRART) are enriched in basic residues. Residues 541–557 (APRGLTPAGAPPTASGA) are compositionally biased toward low complexity. Basic residues-rich tracts occupy residues 558 to 568 (RKTRAGGRGRG) and 619 to 635 (ARGK…PKCR).

Belongs to the PNMA family.

This Homo sapiens (Human) protein is Paraneoplastic antigen-like protein 8B.